A 427-amino-acid chain; its full sequence is Glutamate-1-semialdehyde 2,1-aminomutase (427 aa).

At Lys265 the chain carries N6-(pyridoxal phosphate)lysine.

It belongs to the class-III pyridoxal-phosphate-dependent aminotransferase family. HemL subfamily. As to quaternary structure, homodimer. Pyridoxal 5'-phosphate serves as cofactor.

It localises to the cytoplasm. The enzyme catalyses (S)-4-amino-5-oxopentanoate = 5-aminolevulinate. It functions in the pathway porphyrin-containing compound metabolism; protoporphyrin-IX biosynthesis; 5-aminolevulinate from L-glutamyl-tRNA(Glu): step 2/2. The protein is Glutamate-1-semialdehyde 2,1-aminomutase of Pseudomonas savastanoi pv. phaseolicola (strain 1448A / Race 6) (Pseudomonas syringae pv. phaseolicola (strain 1448A / Race 6)).